Consider the following 504-residue polypeptide: Maturase K (504 aa).

Belongs to the intron maturase 2 family. MatK subfamily.

It is found in the plastid. Its subcellular location is the chloroplast. Functionally, usually encoded in the trnK tRNA gene intron. Probably assists in splicing its own and other chloroplast group II introns. This Arabidopsis halleri protein is Maturase K.